Here is a 1038-residue protein sequence, read N- to C-terminus: Translation initiation factor IF-2 (1038 aa).

A disordered region spans residues 48–426; sequence DALQGPGGNA…RQRRQEYEAM (379 aa). Positions 58 to 87 are enriched in low complexity; that stretch reads GKSAAKPGAPRKAAPAKPAAPSPAAAARPA. The segment covering 88-99 has biased composition (pro residues); the sequence is APKPGAPAPKPA. Low complexity predominate over residues 100 to 114; it reads EAPSSTPAAPSAPSA. The span at 115-125 shows a compositional bias: pro residues; that stretch reads GPRPGPKPAPK. Positions 126 to 141 are enriched in low complexity; the sequence is AAPVTPVPAAEFSAPA. The span at 142-153 shows a compositional bias: pro residues; that stretch reads PAQPAAPQPQAP. A compositionally biased stretch (basic and acidic residues) spans 177-199; that stretch reads DGGRDGGQRDGGRGGERGGDRPA. Residues 200-219 show a composition bias toward low complexity; it reads RPAGQGAPRPGGARPAGPRP. A compositionally biased stretch (gly residues) spans 261-277; sequence SGPGGAPRPQGGQGQGG. The span at 299–315 shows a compositional bias: low complexity; that stretch reads GNRPNPGMMPQRPAAGP. Over residues 319–406 the composition is skewed to gly residues; it reads PGGGGRGPGG…GTQGAFGRPG (88 aa). Over residues 410–419 the composition is skewed to basic residues; that stretch reads RRGRKSKRQR. Positions 531 to 703 constitute a tr-type G domain; that stretch reads SRPPVVTVMG…VVLTADASLD (173 aa). Residues 540-547 are G1; that stretch reads GHVDHGKT. 540 to 547 is a GTP binding site; the sequence is GHVDHGKT. A G2 region spans residues 565–569; the sequence is GITQH. Residues 590 to 593 form a G3 region; sequence DTPG. GTP contacts are provided by residues 590–594 and 644–647; these read DTPGH and NKID. The interval 644–647 is G4; that stretch reads NKID. A G5 region spans residues 680–682; sequence SAK.

The protein belongs to the TRAFAC class translation factor GTPase superfamily. Classic translation factor GTPase family. IF-2 subfamily.

Its subcellular location is the cytoplasm. Functionally, one of the essential components for the initiation of protein synthesis. Protects formylmethionyl-tRNA from spontaneous hydrolysis and promotes its binding to the 30S ribosomal subunits. Also involved in the hydrolysis of GTP during the formation of the 70S ribosomal complex. In Streptomyces griseus subsp. griseus (strain JCM 4626 / CBS 651.72 / NBRC 13350 / KCC S-0626 / ISP 5235), this protein is Translation initiation factor IF-2.